The following is an 883-amino-acid chain: Collagen, type I, alpha 1b (883 aa).

The segment at 1–883 is disordered; it reads QMSYVDHSKS…LGGSNDVELR (883 aa). Over residues 13 to 33 the composition is skewed to pro residues; the sequence is PPQPGPMGPMGPRGPPGPPGS. 3 stretches are compositionally biased toward low complexity: residues 34–57, 113–122, and 129–140; these read SGPQ…AMGS, VPGVMGARGR, and SGARGNDGNTGP. 2 stretches are compositionally biased toward gly residues: residues 147 to 161 and 185 to 194; these read TGGE…GNEG and GTDGGPGAKG. Composition is skewed to low complexity over residues 195–205, 214–223, and 230–248; these read SPGAAGLAGAP, AQGAVGAPGP, and PGAS…PGPA. A compositionally biased stretch (gly residues) spans 285–297; the sequence is GADGGAGGKGAPG. Low complexity-rich tracts occupy residues 310–326 and 390–402; these read ATGE…PGSK and VGAP…AGPA. Positions 415-424 are enriched in gly residues; sequence GAPGLGGPTG. Positions 425–444 are enriched in low complexity; the sequence is ARGAPGPAGNDGAKGEPGAA. 2 stretches are compositionally biased toward gly residues: residues 445-454 and 478-487; these read GAPGGLGAPG and GGKGGDGAPG. Over residues 512–542 the composition is skewed to low complexity; sequence AGPTGPRGETGPPGPAGFAGPPGADGQPGAK. Residues 564–573 show a composition bias toward gly residues; it reads GPKGGAGPPG. Low complexity-rich tracts occupy residues 574–584, 717–726, and 742–756; these read ATGFPGPAGRV, APGAVGPSGK, and SGPA…PAGA. Positions 757-771 are enriched in basic and acidic residues; that stretch reads KGDRGEAGEAGDRGH. A compositionally biased stretch (low complexity) spans 792–812; it reads PAGASGPAGPRGPAGSNGAPG. Positions 821–836 are enriched in pro residues; sequence AGPPGPPGPAGPPGPP.

It belongs to the fibrillar collagen family.

The protein is Collagen, type I, alpha 1b of Epinephelus costae (Goldblotch grouper).